The following is a 307-amino-acid chain: L-carnitine dehydrogenase (307 aa).

8–13 (GTGVIG) is an NAD(+) binding site.

The protein belongs to the 3-hydroxyacyl-CoA dehydrogenase family. L-carnitine dehydrogenase subfamily. As to quaternary structure, homodimer.

It localises to the cytoplasm. It catalyses the reaction carnitine + NAD(+) = 3-dehydrocarnitine + NADH + H(+). Its pathway is amine and polyamine metabolism; carnitine metabolism. Catalyzes the NAD(+)-dependent oxidation of L-carnitine to 3-dehydrocarnitine. The protein is L-carnitine dehydrogenase of Oceanobacillus iheyensis (strain DSM 14371 / CIP 107618 / JCM 11309 / KCTC 3954 / HTE831).